The sequence spans 1027 residues: Exportin-T (1027 aa).

This sequence belongs to the exportin family.

Its subcellular location is the nucleus. It is found in the cytoplasm. Its function is as follows. tRNA nucleus export receptor which facilitates tRNA translocation across the nuclear pore complex. Involved in pre-tRNA splicing, probably by affecting the interaction of pre-tRNA with splicing endonuclease. The polypeptide is Exportin-T (LOS1) (Pyricularia oryzae (strain 70-15 / ATCC MYA-4617 / FGSC 8958) (Rice blast fungus)).